A 663-amino-acid polypeptide reads, in one-letter code: Forkhead protein sep1 (663 aa).

Positions 128–222 form a DNA-binding region, fork-head; that stretch reads KPPYSYAMLI…LKLKLRKPGV (95 aa). Disordered regions lie at residues 220–241 and 325–387; these read PGVN…KYGS and SPLQ…DVET. Residues 340–355 show a composition bias toward low complexity; the sequence is SPASSASPSESLRNES. Ser446 bears the Phosphoserine mark.

It is found in the nucleus. Its function is as follows. Required for promoter sequence element PCB-driven, M-phase-specific transcription. Acts as a transcriptional activator with a role in the regulation of mitosis. Regulates septation and the periodic transcription of cdc15. This chain is Forkhead protein sep1 (sep1), found in Schizosaccharomyces pombe (strain 972 / ATCC 24843) (Fission yeast).